The chain runs to 281 residues: Large ribosomal subunit protein uL2 (281 aa).

Positions 223 to 255 are disordered; it reads TVRGSVMNPNDHPHGGGEGRAPIGRKSPVTPWG.

The protein belongs to the universal ribosomal protein uL2 family. As to quaternary structure, part of the 50S ribosomal subunit. Forms a bridge to the 30S subunit in the 70S ribosome.

Its function is as follows. One of the primary rRNA binding proteins. Required for association of the 30S and 50S subunits to form the 70S ribosome, for tRNA binding and peptide bond formation. It has been suggested to have peptidyltransferase activity; this is somewhat controversial. Makes several contacts with the 16S rRNA in the 70S ribosome. This Mycoplasma capricolum subsp. capricolum (strain California kid / ATCC 27343 / NCTC 10154) protein is Large ribosomal subunit protein uL2.